A 399-amino-acid polypeptide reads, in one-letter code: Tryptophan synthase beta chain (399 aa).

Lysine 90 is subject to N6-(pyridoxal phosphate)lysine.

It belongs to the TrpB family. Tetramer of two alpha and two beta chains. The cofactor is pyridoxal 5'-phosphate.

It catalyses the reaction (1S,2R)-1-C-(indol-3-yl)glycerol 3-phosphate + L-serine = D-glyceraldehyde 3-phosphate + L-tryptophan + H2O. It functions in the pathway amino-acid biosynthesis; L-tryptophan biosynthesis; L-tryptophan from chorismate: step 5/5. Functionally, the beta subunit is responsible for the synthesis of L-tryptophan from indole and L-serine. The chain is Tryptophan synthase beta chain from Phocaeicola vulgatus (strain ATCC 8482 / DSM 1447 / JCM 5826 / CCUG 4940 / NBRC 14291 / NCTC 11154) (Bacteroides vulgatus).